The sequence spans 268 residues: Putative type I specificity subunit S.MpnORF365P (268 aa).

The protein belongs to the type-I restriction system S methylase family. As to quaternary structure, the methyltransferase is composed of M and S polypeptides.

In terms of biological role, the specificity (S) subunit of a type I methyltransferase (MTase); this subunit dictates DNA sequence specificity. The single R subunit has multiple frameshifts and is probably not expressed. This Mycoplasma pneumoniae (strain ATCC 29342 / M129 / Subtype 1) (Mycoplasmoides pneumoniae) protein is Putative type I specificity subunit S.MpnORF365P.